Consider the following 514-residue polypeptide: Na(+)/H(+) antiporter NhaB (514 aa).

The next 12 helical transmembrane spans lie at 23–43, 63–83, 97–117, 120–140, 144–164, 202–222, 238–258, 303–323, 357–377, 391–411, 447–467, and 475–495; these read LALLVFLIVNPFIFLANPFVA, PLLPGGLLAIEAVIIGMTSAA, LLLMFMVAGIYFMKQLLLFIF, LLLSIRSKMVLSLAFCVAAAF, FLDALTVVAVVISVAVGFYGI, LMMHAGVGTALGGVMTMVGEP, FFLRMSPVTVPVLVCGLLTCM, AVIGVWLVTALALHLAEVGLI, LTVFFSIVAVIIDQHLFAPII, LFYLFNGLLSSISDNVFVGTI, ATPNGQAAFLFLLTSALAPLI, and VWMALPYTIVLTLIGLLCVEF.

This sequence belongs to the NhaB Na(+)/H(+) (TC 2.A.34) antiporter family.

The protein resides in the cell inner membrane. The enzyme catalyses 2 Na(+)(in) + 3 H(+)(out) = 2 Na(+)(out) + 3 H(+)(in). Its function is as follows. Na(+)/H(+) antiporter that extrudes sodium in exchange for external protons. The polypeptide is Na(+)/H(+) antiporter NhaB (Salmonella paratyphi A (strain ATCC 9150 / SARB42)).